Here is a 215-residue protein sequence, read N- to C-terminus: Pyridoxine/pyridoxamine 5'-phosphate oxidase (215 aa).

Substrate contacts are provided by residues 9 to 12 and Lys69; that span reads RRDY. Residues 64–69, 79–80, Lys86, and Gln108 contribute to the FMN site; these read RILLLK and FT. Tyr126, Arg130, and Ser134 together coordinate substrate. FMN-binding positions include 143-144 and Trp188; that span reads QS. Residue 194-196 participates in substrate binding; sequence RLH. Arg198 serves as a coordination point for FMN.

The protein belongs to the pyridoxamine 5'-phosphate oxidase family. Homodimer. It depends on FMN as a cofactor.

It catalyses the reaction pyridoxamine 5'-phosphate + O2 + H2O = pyridoxal 5'-phosphate + H2O2 + NH4(+). The catalysed reaction is pyridoxine 5'-phosphate + O2 = pyridoxal 5'-phosphate + H2O2. It functions in the pathway cofactor metabolism; pyridoxal 5'-phosphate salvage; pyridoxal 5'-phosphate from pyridoxamine 5'-phosphate: step 1/1. The protein operates within cofactor metabolism; pyridoxal 5'-phosphate salvage; pyridoxal 5'-phosphate from pyridoxine 5'-phosphate: step 1/1. Functionally, catalyzes the oxidation of either pyridoxine 5'-phosphate (PNP) or pyridoxamine 5'-phosphate (PMP) into pyridoxal 5'-phosphate (PLP). This is Pyridoxine/pyridoxamine 5'-phosphate oxidase from Pseudomonas fluorescens (strain ATCC BAA-477 / NRRL B-23932 / Pf-5).